We begin with the raw amino-acid sequence, 355 residues long: UDP-N-acetylglucosamine--N-acetylmuramyl-(pentapeptide) pyrophosphoryl-undecaprenol N-acetylglucosamine transferase (355 aa).

Residues 13–15, asparagine 125, arginine 162, serine 190, isoleucine 244, and glutamine 289 contribute to the UDP-N-acetyl-alpha-D-glucosamine site; that span reads TGG.

The protein belongs to the glycosyltransferase 28 family. MurG subfamily.

The protein localises to the cell inner membrane. The catalysed reaction is di-trans,octa-cis-undecaprenyl diphospho-N-acetyl-alpha-D-muramoyl-L-alanyl-D-glutamyl-meso-2,6-diaminopimeloyl-D-alanyl-D-alanine + UDP-N-acetyl-alpha-D-glucosamine = di-trans,octa-cis-undecaprenyl diphospho-[N-acetyl-alpha-D-glucosaminyl-(1-&gt;4)]-N-acetyl-alpha-D-muramoyl-L-alanyl-D-glutamyl-meso-2,6-diaminopimeloyl-D-alanyl-D-alanine + UDP + H(+). The protein operates within cell wall biogenesis; peptidoglycan biosynthesis. Its function is as follows. Cell wall formation. Catalyzes the transfer of a GlcNAc subunit on undecaprenyl-pyrophosphoryl-MurNAc-pentapeptide (lipid intermediate I) to form undecaprenyl-pyrophosphoryl-MurNAc-(pentapeptide)GlcNAc (lipid intermediate II). The protein is UDP-N-acetylglucosamine--N-acetylmuramyl-(pentapeptide) pyrophosphoryl-undecaprenol N-acetylglucosamine transferase of Neisseria meningitidis serogroup A / serotype 4A (strain DSM 15465 / Z2491).